The sequence spans 228 residues: MKILIVEDDIKTGEYLSKGLTEAGFVVDHADNGLTGYHLAMTAEYDLVILDIMLPDVNGWDIIRMLRSAGKGMPVLLLTALGTIEHRVKGLELGADDYLVKPFAFAELLARVRTLLRRGNTMITESQLKVADLSVDLVSRKVSRAGNRIVLTSKEFSLLEFFIRHQGEVLPRSLIAFFMVWVHEFLTADTNAIDVAVKRLRAKIDNDYGTKLNQTVRGVGYMLEIPDA.

A Response regulatory domain is found at 2 to 116; that stretch reads KILIVEDDIK…ELLARVRTLL (115 aa). The residue at position 51 (Asp-51) is a 4-aspartylphosphate. A DNA-binding region (ompR/PhoB-type) is located at residues 125–225; the sequence is ESQLKVADLS…VRGVGYMLEI (101 aa).

Post-translationally, phosphorylated by SilS.

It is found in the cytoplasm. Its function is as follows. Component of the sil cation-efflux system that confers resistance to silver. Probable member of a two-component regulatory system SilS/SilR. The polypeptide is Probable transcriptional regulatory protein SilR (silR) (Salmonella typhimurium).